Reading from the N-terminus, the 267-residue chain is Tryptophan synthase alpha chain (267 aa).

Catalysis depends on proton acceptor residues Glu-49 and Asp-60.

Belongs to the TrpA family. As to quaternary structure, tetramer of two alpha and two beta chains.

The catalysed reaction is (1S,2R)-1-C-(indol-3-yl)glycerol 3-phosphate + L-serine = D-glyceraldehyde 3-phosphate + L-tryptophan + H2O. Its pathway is amino-acid biosynthesis; L-tryptophan biosynthesis; L-tryptophan from chorismate: step 5/5. Functionally, the alpha subunit is responsible for the aldol cleavage of indoleglycerol phosphate to indole and glyceraldehyde 3-phosphate. The sequence is that of Tryptophan synthase alpha chain from Acidothermus cellulolyticus (strain ATCC 43068 / DSM 8971 / 11B).